We begin with the raw amino-acid sequence, 1177 residues long: Tyrosine-protein kinase hopscotch (1177 aa).

The tract at residues 1 to 41 is disordered; that stretch reads MALANGGEDRMDDSSSGRTSLADSASLTNSSLRSGTSSQSI. Residues 16–41 show a composition bias toward polar residues; it reads SGRTSLADSASLTNSSLRSGTSSQSI. A phosphoserine mark is found at Ser-40 and Ser-321. Residues 46-414 form the FERM domain; it reads GTIRVFNFTT…IYIRLSSKWM (369 aa). One can recognise an SH2; atypical domain in the interval 433-539; it reads HCHGPIGGAY…YRIPASKYDK (107 aa). Protein kinase domains follow at residues 582–843 and 892–1164; these read YPDS…AEIL and YNME…HPTD. ATP contacts are provided by residues 898–906 and Lys-926; that span reads IGRGHYGTV. Asp-1014 (proton acceptor) is an active-site residue. Phosphotyrosine; by autocatalysis is present on residues Tyr-1047 and Tyr-1048. The segment at 1158 to 1177 is disordered; the sequence is KVTHPTDGHQSPPNQPTDAE.

The protein belongs to the protein kinase superfamily. Tyr protein kinase family. JAK subfamily. As to quaternary structure, forms a complex with Hsp83 and piwi; probably Hop mediates the interaction between piwi and Hsp83.

Its subcellular location is the endomembrane system. It catalyses the reaction L-tyrosyl-[protein] + ATP = O-phospho-L-tyrosyl-[protein] + ADP + H(+). Functionally, tyrosine kinase of the non-receptor type, phosphorylates the marelle protein. Required maternally for the establishment of the normal array of embryonic segments: involved in the control of pair-rule gene transcription in a stripe-specific manner. Together with Hsp83 and piwi, mediates canalization, also known as developmental robustness, likely via epigenetic silencing of existing genetic variants and suppression of transposon-induced new genetic variation. This chain is Tyrosine-protein kinase hopscotch (hop), found in Drosophila melanogaster (Fruit fly).